Consider the following 147-residue polypeptide: uncharacterized protein (147 aa).

A helical membrane pass occupies residues 63 to 79 (LFIVACSAVFATIAYIN).

This sequence belongs to the FUN14 family.

The protein resides in the membrane. This is an uncharacterized protein from Schizosaccharomyces pombe (strain 972 / ATCC 24843) (Fission yeast).